Consider the following 705-residue polypeptide: Kinesin-like protein KIF2A (705 aa).

Positions 65–185 (DLVPDEDIEP…QQELREKRAQ (121 aa)) are disordered. A Phosphoserine modification is found at Ser-75. Thr-96 is modified (phosphothreonine). Ser-99 carries the post-translational modification Phosphoserine. Position 101 is an N6-acetyllysine (Lys-101). Residues 122–139 (LPEQSSSAQQNGSVSDIS) are compositionally biased toward polar residues. Phosphoserine occurs at positions 134 and 139. A coiled-coil region spans residues 153-186 (RRKSNCVKEVEKLQEKREKRRLQQQELREKRAQD). Basic and acidic residues predominate over residues 158–185 (CVKEVEKLQEKREKRRLQQQELREKRAQ). The Kinesin motor domain occupies 222–552 (RICVCVRKRP…LRYANRVKEL (331 aa)). 312 to 319 (GQTGSGKT) is an ATP binding site. Gln-572 bears the Phosphoserine mark. Residues 659-698 (ATQLEAILEQKIDILTELRDKVKSFRAALQEEEQASKQIN) adopt a coiled-coil conformation.

The protein belongs to the TRAFAC class myosin-kinesin ATPase superfamily. Kinesin family. MCAK/KIF2 subfamily. As to quaternary structure, interacts with AURKA and PLK1. Interacts with PSRC1. Interacts with MCRS1; the interaction enhances recruitment of KIF2A to the minus ends of spindle microtubules which promotes chromosome alignment.

It is found in the cytoplasm. The protein localises to the cytoskeleton. Its subcellular location is the microtubule organizing center. It localises to the centrosome. The protein resides in the spindle pole. It is found in the spindle. In terms of biological role, plus end-directed microtubule-dependent motor required for normal brain development. May regulate microtubule dynamics during axonal growth. Required for normal progression through mitosis. Required for normal congress of chromosomes at the metaphase plate. Required for normal spindle dynamics during mitosis. Promotes spindle turnover. Implicated in formation of bipolar mitotic spindles. Has microtubule depolymerization activity. The chain is Kinesin-like protein KIF2A from Rattus norvegicus (Rat).